Reading from the N-terminus, the 493-residue chain is 3-octaprenyl-4-hydroxybenzoate carboxy-lyase (493 aa).

Mn(2+) is bound at residue N172. Residues 175–177 (IYR), 189–191 (RWL), and 194–195 (RG) contribute to the prenylated FMN site. E238 provides a ligand contact to Mn(2+). The Proton donor role is filled by D287.

Belongs to the UbiD family. In terms of assembly, homohexamer. Prenylated FMN serves as cofactor. It depends on Mn(2+) as a cofactor.

The protein resides in the cell membrane. It catalyses the reaction a 4-hydroxy-3-(all-trans-polyprenyl)benzoate + H(+) = a 2-(all-trans-polyprenyl)phenol + CO2. The protein operates within cofactor biosynthesis; ubiquinone biosynthesis. Catalyzes the decarboxylation of 3-octaprenyl-4-hydroxy benzoate to 2-octaprenylphenol, an intermediate step in ubiquinone biosynthesis. This chain is 3-octaprenyl-4-hydroxybenzoate carboxy-lyase, found in Shewanella piezotolerans (strain WP3 / JCM 13877).